Here is a 155-residue protein sequence, read N- to C-terminus: MIEKRTVCQIVEEWLEDKDYFLVEVTVSPDDKIVVEIDHAEGVWIEDCVELSRFIESKLNREEEDYELEVGSAGIGQPFKVLQQYYNHIGLEVEVLTKGGRKLSGVLKDADEEKFVVTVQKKVKPEGAKRPQLVEEDETFTYDDIKYTKYLISFK.

It belongs to the RimP family.

Its subcellular location is the cytoplasm. Its function is as follows. Required for maturation of 30S ribosomal subunits. This is Ribosome maturation factor RimP from Bacteroides fragilis (strain ATCC 25285 / DSM 2151 / CCUG 4856 / JCM 11019 / LMG 10263 / NCTC 9343 / Onslow / VPI 2553 / EN-2).